Here is a 288-residue protein sequence, read N- to C-terminus: Sulfur carrier protein FdhD (288 aa).

The active-site Cysteine persulfide intermediate is cysteine 122. A Mo-bis(molybdopterin guanine dinucleotide)-binding site is contributed by 268–273; it reads FVRGER.

The protein belongs to the FdhD family.

It is found in the cytoplasm. Required for formate dehydrogenase (FDH) activity. Acts as a sulfur carrier protein that transfers sulfur from IscS to the molybdenum cofactor prior to its insertion into FDH. The chain is Sulfur carrier protein FdhD from Anaeromyxobacter dehalogenans (strain 2CP-1 / ATCC BAA-258).